A 176-amino-acid chain; its full sequence is Large ribosomal subunit protein eL6A (176 aa).

At serine 2 the chain carries N-acetylserine. Serine 12 is modified (phosphoserine). Residue lysine 128 forms a Glycyl lysine isopeptide (Lys-Gly) (interchain with G-Cter in ubiquitin) linkage.

This sequence belongs to the eukaryotic ribosomal protein eL6 family. Component of the large ribosomal subunit (LSU). Mature yeast ribosomes consist of a small (40S) and a large (60S) subunit. The 40S small subunit contains 1 molecule of ribosomal RNA (18S rRNA) and 33 different proteins (encoded by 57 genes). The large 60S subunit contains 3 rRNA molecules (25S, 5.8S and 5S rRNA) and 46 different proteins (encoded by 81 genes). N-terminally acetylated by acetyltransferase NatA.

The protein resides in the cytoplasm. Functionally, component of the ribosome, a large ribonucleoprotein complex responsible for the synthesis of proteins in the cell. The small ribosomal subunit (SSU) binds messenger RNAs (mRNAs) and translates the encoded message by selecting cognate aminoacyl-transfer RNA (tRNA) molecules. The large subunit (LSU) contains the ribosomal catalytic site termed the peptidyl transferase center (PTC), which catalyzes the formation of peptide bonds, thereby polymerizing the amino acids delivered by tRNAs into a polypeptide chain. The nascent polypeptides leave the ribosome through a tunnel in the LSU and interact with protein factors that function in enzymatic processing, targeting, and the membrane insertion of nascent chains at the exit of the ribosomal tunnel. This chain is Large ribosomal subunit protein eL6A, found in Saccharomyces cerevisiae (strain ATCC 204508 / S288c) (Baker's yeast).